Consider the following 467-residue polypeptide: tRNA modification GTPase MnmE (467 aa).

Positions 25, 87, and 130 each coordinate (6S)-5-formyl-5,6,7,8-tetrahydrofolate. One can recognise a TrmE-type G domain in the interval 226-389 (GLSVVLAGQP…LRGELLRIAG (164 aa)). A K(+)-binding site is contributed by asparagine 236. GTP is bound by residues 236-241 (NVGKSS), 255-261 (TPIAGTT), and 280-283 (DTAG). Serine 240 is a Mg(2+) binding site. 3 residues coordinate K(+): threonine 255, isoleucine 257, and threonine 260. Threonine 261 provides a ligand contact to Mg(2+). Lysine 467 lines the (6S)-5-formyl-5,6,7,8-tetrahydrofolate pocket.

Belongs to the TRAFAC class TrmE-Era-EngA-EngB-Septin-like GTPase superfamily. TrmE GTPase family. Homodimer. Heterotetramer of two MnmE and two MnmG subunits. K(+) serves as cofactor.

The protein resides in the cytoplasm. Functionally, exhibits a very high intrinsic GTPase hydrolysis rate. Involved in the addition of a carboxymethylaminomethyl (cmnm) group at the wobble position (U34) of certain tRNAs, forming tRNA-cmnm(5)s(2)U34. This is tRNA modification GTPase MnmE from Burkholderia thailandensis (strain ATCC 700388 / DSM 13276 / CCUG 48851 / CIP 106301 / E264).